We begin with the raw amino-acid sequence, 296 residues long: MSVTTPRREASLLSRAVAVAAAAAATVALAAPAQAANPYERGPNPTESMLEARSGPFSVSEERASRLGADGFGGGTIYYPRENNTYGAIAISPGYTGTQSSIAWLGERIASHGFVVIAIDTNTTLDQPDSRARQLNAALDYMLTDASSSVRNRIDASRLAVMGHSMGGGGTLRLASQRPDLKAAIPLTPWHLNKSWRDITVPTLIIGADLDTIAPVSSHSEPFYNSIPSSTDKAYLELNNATHFAPNITNKTIGMYSVAWLKRFVDEDTRYTQFLCPGPRTGLLSDVDEYRSTCPF.

Positions 1-35 (MSVTTPRREASLLSRAVAVAAAAAATVALAAPAQA) are cleaved as a signal peptide. Residues 36–57 (ANPYERGPNPTESMLEARSGPF) form a disordered region. Residue Tyr-95 participates in poly(ethylene terephthalate) binding. Residue Ser-165 is the Nucleophile of the active site. 2 residues coordinate poly(ethylene terephthalate): Met-166 and Trp-190. Residues Asp-211 and His-243 each act as charge relay system in the active site. A disulfide bond links Cys-276 and Cys-294.

This sequence belongs to the AB hydrolase superfamily. Monomer.

Its subcellular location is the secreted. The protein localises to the periplasm. It carries out the reaction (ethylene terephthalate)(n) + H2O = (ethylene terephthalate)(n-1) + 4-[(2-hydroxyethoxy)carbonyl]benzoate + H(+). It catalyses the reaction a butanoate ester + H2O = an aliphatic alcohol + butanoate + H(+). The enzyme catalyses cutin + H2O = cutin monomers.. Catalyzes the hydrolysis of cutin, a polyester that forms the structure of plant cuticle. Shows esterase activity towards p-nitrophenol-linked aliphatic esters (pNP-aliphatic esters). Capable of degrading the plastic poly(ethylene terephthalate) (PET), the most abundant polyester plastic in the world. Can also depolymerize the synthetic polyester poly(epsilon-caprolactone) (PCL). This is Cutinase est1 from Thermobifida alba (Thermomonospora alba).